An 887-amino-acid chain; its full sequence is Phosphatidylinositol 3-kinase catalytic subunit type 3 (887 aa).

In terms of domain architecture, C2 PI3K-type spans 35–184; that stretch reads YKAVLEDPML…LAKLTKAHRQ (150 aa). A disordered region spans residues 149 to 170; it reads VEADGSEPTRTPGRTSSTLSED. Residues 156–170 are compositionally biased toward polar residues; that stretch reads PTRTPGRTSSTLSED. Position 163 is a phosphothreonine; by AMPK (Thr-163). Ser-165 carries the post-translational modification Phosphoserine; by AMPK. Phosphoserine is present on residues Ser-244, Ser-261, and Ser-282. The PIK helical domain occupies 283–520; the sequence is DHDLKPNATT…PKTHEMYLNV (238 aa). The segment at 415–466 is disordered; the sequence is LEPTKKDSQTSASESLSNSGVSSGDIDSSQIITNPLPPVASPPPASKAKEVS. Residues 425–437 are compositionally biased toward low complexity; sequence SASESLSNSGVSS. Positions 449–459 are enriched in pro residues; that stretch reads PLPPVASPPPA. The PI3K/PI4K catalytic domain maps to 605 to 871; the sequence is IPETATLFKS…LIDESVHALF (267 aa). The tract at residues 611–617 is G-loop; the sequence is LFKSALM. The segment at 740–748 is catalytic loop; it reads GVGDRHLDN. The activation loop stretch occupies residues 759–780; that stretch reads HIDFGYILGRDPKPLPPPMKLN.

This sequence belongs to the PI3/PI4-kinase family. Component of the PI3K (PI3KC3/PI3K-III/class III phosphatidylinositol 3-kinase) complex the core of which is composed of the catalytic subunit PIK3C3, the regulatory subunit PIK3R4 and BECN1 associating with additional regulatory/auxiliary subunits to form alternative complex forms. Alternative complex forms containing a fourth regulatory subunit in a mutually exclusive manner are: the PI3K complex I (PI3KC3-C1) containing ATG14, and the PI3K complex II (PI3KC3-C2) containing UVRAG. PI3KC3-C1 displays a V-shaped architecture with PIK3R4 serving as a bridge between PIK3C3 and the ATG14:BECN1 subcomplex. Both, PI3KC3-C1 and PI3KC3-C2, can associate with further regulatory subunits such as RUBCN, SH3GLB1/Bif-1 and AMBRA1. PI3KC3-C1 probably associates with PIK3CB. Interacts with RAB7A in the presence of PIK3R4. Interacts with AMBRA1. Interacts with BECN1P1/BECN2. Interacts with SLAMF1. May be a component of a complex composed of RAB5A (in GDP-bound form), DYN2 and PIK3C3. Interacts with NCKAP1L. Interacts with ATG14; this interaction is increased in the absence of TMEM39A. Interacts with STEEP1; the interaction is STING1-dependent and required for trafficking of STING1 from the endoplasmic reticulum. Interacts with YWHAG. Interacts with ARMC3. Requires Mn(2+) as cofactor. In terms of processing, ubiquitinated via 'Lys-29'- and 'Lys-48'-linked ubiquitination by UBE3C, promoting its degradation. Deubiquitination by ZRANB1/TRABID promotes its stabilization, leading to autophagosome maturation.

The protein resides in the midbody. It is found in the late endosome. The protein localises to the cytoplasmic vesicle. Its subcellular location is the autophagosome. The enzyme catalyses a 1,2-diacyl-sn-glycero-3-phospho-(1D-myo-inositol) + ATP = a 1,2-diacyl-sn-glycero-3-phospho-(1D-myo-inositol-3-phosphate) + ADP + H(+). Catalytic subunit of the PI3K complex that mediates formation of phosphatidylinositol 3-phosphate; different complex forms are believed to play a role in multiple membrane trafficking pathways: PI3KC3-C1 is involved in initiation of autophagosomes and PI3KC3-C2 in maturation of autophagosomes and endocytosis. As part of PI3KC3-C1, promotes endoplasmic reticulum membrane curvature formation prior to vesicle budding. Involved in regulation of degradative endocytic trafficking and required for the abscission step in cytokinesis, probably in the context of PI3KC3-C2. Involved in the transport of lysosomal enzyme precursors to lysosomes. Required for transport from early to late endosomes. The protein is Phosphatidylinositol 3-kinase catalytic subunit type 3 of Mus musculus (Mouse).